The following is a 176-amino-acid chain: Pro-glucagon (176 aa).

Residues 1–20 (MKSLYFVAGLLVMLAQGSWQ) form the signal peptide. The span at 25 to 35 (NTEEKSSSFPA) shows a compositional bias: polar residues. The disordered stretch occupies residues 25–59 (NTEEKSSSFPAPQTDPLGDPDQISEDKRHSQGTFT). Ser54 is modified (phosphoserine). A propeptide spanning residues 84–89 (NKNNIA) is cleaved from the precursor. Phosphoserine occurs at positions 105 and 108. The residue at position 127 (Arg127) is an Arginine amide. Residues 131–145 (DFPEEVNIVEELRRR) constitute a propeptide that is removed on maturation. Residues Ser150 and Ser152 each carry the phosphoserine modification.

The protein belongs to the glucagon family. Post-translationally, proglucagon is post-translationally processed in a tissue-specific manner in pancreatic A cells and intestinal L cells. In pancreatic A cells, the major bioactive hormone is glucagon cleaved by PCSK2/PC2. In the intestinal L cells PCSK1/PC1 liberates GLP-1, GLP-2, glicentin and oxyntomodulin. GLP-1 is further N-terminally truncated by post-translational processing in the intestinal L cells resulting in GLP-1(7-37) GLP-1-(7-36)amide. The C-terminal amidation is neither important for the metabolism of GLP-1 nor for its effects on the endocrine pancreas. In terms of tissue distribution, glucagon is secreted in the A cells of the islets of Langerhans. GLP-1, GLP-2, oxyntomodulin and glicentin are secreted from enteroendocrine cells throughout the gastrointestinal tract. GLP-1 and GLP-2 are also secreted in selected neurons in the brain.

It is found in the secreted. Functionally, plays a key role in glucose metabolism and homeostasis. Regulates blood glucose by increasing gluconeogenesis and decreasing glycolysis. A counterregulatory hormone of insulin, raises plasma glucose levels in response to insulin-induced hypoglycemia. Plays an important role in initiating and maintaining hyperglycemic conditions in diabetes. Its function is as follows. Potent stimulator of glucose-dependent insulin release. Also stimulates insulin release in response to IL6. Plays important roles on gastric motility and the suppression of plasma glucagon levels. May be involved in the suppression of satiety and stimulation of glucose disposal in peripheral tissues, independent of the actions of insulin. Has growth-promoting activities on intestinal epithelium. May also regulate the hypothalamic pituitary axis (HPA) via effects on LH, TSH, CRH, oxytocin, and vasopressin secretion. Increases islet mass through stimulation of islet neogenesis and pancreatic beta cell proliferation. Inhibits beta cell apoptosis. Stimulates intestinal growth and up-regulates villus height in the small intestine, concomitant with increased crypt cell proliferation and decreased enterocyte apoptosis. The gastrointestinal tract, from the stomach to the colon is the principal target for GLP-2 action. Plays a key role in nutrient homeostasis, enhancing nutrient assimilation through enhanced gastrointestinal function, as well as increasing nutrient disposal. Stimulates intestinal glucose transport and decreases mucosal permeability. In terms of biological role, significantly reduces food intake. Inhibits gastric emptying in humans. Suppression of gastric emptying may lead to increased gastric distension, which may contribute to satiety by causing a sensation of fullness. Functionally, may modulate gastric acid secretion and the gastro-pyloro-duodenal activity. May play an important role in intestinal mucosal growth in the early period of life. The protein is Pro-glucagon (GCG) of Ovis aries (Sheep).